Consider the following 154-residue polypeptide: Endoribonuclease YbeY (154 aa).

Zn(2+) contacts are provided by histidine 113, histidine 117, and histidine 123.

It belongs to the endoribonuclease YbeY family. The cofactor is Zn(2+).

It localises to the cytoplasm. Its function is as follows. Single strand-specific metallo-endoribonuclease involved in late-stage 70S ribosome quality control and in maturation of the 3' terminus of the 16S rRNA. The chain is Endoribonuclease YbeY from Vibrio campbellii (strain ATCC BAA-1116).